Consider the following 210-residue polypeptide: Putative 3-methyladenine DNA glycosylase (210 aa).

This sequence belongs to the DNA glycosylase MPG family.

The chain is Putative 3-methyladenine DNA glycosylase from Corynebacterium glutamicum (strain R).